The primary structure comprises 372 residues: Steroid C26-monooxygenase (372 aa).

Cys-314 is a binding site for heme.

The protein belongs to the cytochrome P450 family. It depends on heme as a cofactor.

It carries out the reaction cholest-4-en-3-one + 6 reduced [2Fe-2S]-[ferredoxin] + 3 O2 + 5 H(+) = (25R)-3-oxocholest-4-en-26-oate + 6 oxidized [2Fe-2S]-[ferredoxin] + 4 H2O. Its pathway is steroid metabolism; cholesterol degradation. Its function is as follows. Involved in the utilization of cholesterol as the sole carbon and energy source by degrading the side chain during infection. Primarily catalyzes the sequential oxidation of the terminal methyl of cholest-4-en-3-one into (25R)-26-hydroxycholest-4-en-3-one (alcohol), (25R)-26-oxocholest-4-en-3-one (aldehyde), to finally yield the carboxylic acid (25R)-3-oxocholest-4-en-26-oate. Also able to sequentially oxidize cholesterol itself, not only cholest-4-en-3-one. This is Steroid C26-monooxygenase (cyp142) from Mycobacterium tuberculosis (strain CDC 1551 / Oshkosh).